A 425-amino-acid polypeptide reads, in one-letter code: Enolase (425 aa).

Gln163 provides a ligand contact to (2R)-2-phosphoglycerate. Glu205 (proton donor) is an active-site residue. Mg(2+) contacts are provided by Asp242, Glu285, and Asp312. Residues Lys337, Arg366, Ser367, and Lys388 each contribute to the (2R)-2-phosphoglycerate site. Lys337 serves as the catalytic Proton acceptor.

It belongs to the enolase family. The cofactor is Mg(2+).

It localises to the cytoplasm. The protein localises to the secreted. Its subcellular location is the cell surface. The enzyme catalyses (2R)-2-phosphoglycerate = phosphoenolpyruvate + H2O. It functions in the pathway carbohydrate degradation; glycolysis; pyruvate from D-glyceraldehyde 3-phosphate: step 4/5. In terms of biological role, catalyzes the reversible conversion of 2-phosphoglycerate (2-PG) into phosphoenolpyruvate (PEP). It is essential for the degradation of carbohydrates via glycolysis. This Granulibacter bethesdensis (strain ATCC BAA-1260 / CGDNIH1) protein is Enolase.